A 175-amino-acid polypeptide reads, in one-letter code: ATP synthase subunit b (175 aa).

A helical membrane pass occupies residues 13–33; the sequence is LLSPNPGLIFWTAVTFLLLLL.

The protein belongs to the ATPase B chain family. In terms of assembly, F-type ATPases have 2 components, F(1) - the catalytic core - and F(0) - the membrane proton channel. F(1) has five subunits: alpha(3), beta(3), gamma(1), delta(1), epsilon(1). F(0) has four main subunits: a(1), b(2) and c(10-14). The alpha and beta chains form an alternating ring which encloses part of the gamma chain. F(1) is attached to F(0) by a central stalk formed by the gamma and epsilon chains, while a peripheral stalk is formed by the delta and b chains.

Its subcellular location is the cell inner membrane. In terms of biological role, f(1)F(0) ATP synthase produces ATP from ADP in the presence of a proton or sodium gradient. F-type ATPases consist of two structural domains, F(1) containing the extramembraneous catalytic core and F(0) containing the membrane proton channel, linked together by a central stalk and a peripheral stalk. During catalysis, ATP synthesis in the catalytic domain of F(1) is coupled via a rotary mechanism of the central stalk subunits to proton translocation. Functionally, component of the F(0) channel, it forms part of the peripheral stalk, linking F(1) to F(0). This is ATP synthase subunit b from Chloroherpeton thalassium (strain ATCC 35110 / GB-78).